Reading from the N-terminus, the 347-residue chain is Ribosomal RNA large subunit methyltransferase M (347 aa).

Residues Ser184, 217 to 220, Asp236, Asp256, and Asp272 each bind S-adenosyl-L-methionine; that span reads APGG. Lys301 acts as the Proton acceptor in catalysis.

This sequence belongs to the class I-like SAM-binding methyltransferase superfamily. RNA methyltransferase RlmE family. RlmM subfamily. As to quaternary structure, monomer.

The protein localises to the cytoplasm. It catalyses the reaction cytidine(2498) in 23S rRNA + S-adenosyl-L-methionine = 2'-O-methylcytidine(2498) in 23S rRNA + S-adenosyl-L-homocysteine + H(+). In terms of biological role, catalyzes the 2'-O-methylation at nucleotide C2498 in 23S rRNA. In Xanthomonas campestris pv. campestris (strain 8004), this protein is Ribosomal RNA large subunit methyltransferase M.